Here is a 329-residue protein sequence, read N- to C-terminus: GTPase Obg (329 aa).

One can recognise an Obg domain in the interval 1–159; it reads MQFIDQARIT…WLLHLELKLL (159 aa). Residues 160–328 form the OBG-type G domain; the sequence is AEVGIIGLPN…LLNKIWSKLE (169 aa). ATP contacts are provided by residues 166–173, 191–195, 213–216, 280–283, and 309–311; these read GLPNAGKS, FTTLI, DIPG, NKKE, and SAI. Serine 173 and threonine 193 together coordinate Mg(2+).

The protein belongs to the TRAFAC class OBG-HflX-like GTPase superfamily. OBG GTPase family. In terms of assembly, monomer. Mg(2+) serves as cofactor.

It localises to the cytoplasm. Functionally, an essential GTPase which binds GTP, GDP and possibly (p)ppGpp with moderate affinity, with high nucleotide exchange rates and a fairly low GTP hydrolysis rate. Plays a role in control of the cell cycle, stress response, ribosome biogenesis and in those bacteria that undergo differentiation, in morphogenesis control. The sequence is that of GTPase Obg from Prochlorococcus marinus (strain SARG / CCMP1375 / SS120).